The following is a 203-amino-acid chain: Mitotic spindle assembly checkpoint protein MAD2A (203 aa).

Positions 14-196 (KGSTEIVTEF…TTIHKVESMV (183 aa)) constitute an HORMA domain. A required for assuming the closed conformation and for interaction with cdc20 region spans residues 194-203 (SMVAYKISND).

This sequence belongs to the MAD2 family. Interacts with cdc20.

The protein resides in the nucleus. Its subcellular location is the chromosome. The protein localises to the centromere. It is found in the kinetochore. It localises to the cytoplasm. Component of the spindle-assembly checkpoint that prevents the onset of anaphase until all chromosomes are properly aligned at the metaphase plate. Required for the execution of the mitotic checkpoint which monitors the process of kinetochore-spindle attachment and inhibits the activity of the anaphase promoting complex until all chromosomes are aligned at the metaphase plate. This Dictyostelium discoideum (Social amoeba) protein is Mitotic spindle assembly checkpoint protein MAD2A (mad2l1-1).